Here is a 449-residue protein sequence, read N- to C-terminus: FAD-linked oxidoreductase janO (449 aa).

Residues 32–203 enclose the FAD-binding PCMH-type domain; it reads PDAQPLAIIK…TRFHLNTRPL (172 aa).

It belongs to the oxygen-dependent FAD-linked oxidoreductase family. The cofactor is FAD.

Its pathway is secondary metabolite biosynthesis. FAD-linked oxidoreductase; part of the gene cluster that mediates the biosynthesis of the indole diterpenes janthitremanes such as shearinine K or shearinine A. The geranylgeranyl diphosphate (GGPP) synthase janG catalyzes the first step in janthitremane biosynthesis via conversion of farnesyl pyrophosphate and isopentyl pyrophosphate into geranylgeranyl pyrophosphate (GGPP). Condensation of indole-3-glycerol phosphate with GGPP by the prenyl transferase janC then forms 3-geranylgeranylindole (3-GGI). Epoxidation by the FAD-dependent monooxygenase janM leads to a epoxidized-GGI that is substrate of the terpene cyclase janB for cyclization to yield paspaline. Paspaline is subsequently converted to 13-desoxypaspaline by the cytochrome P450 monooxygenase janP, via beta-PC-M6 in a series of alpha-face oxidations. The cytochrome P450 monooxygenase janQ is proposed to carry out sequential beta-face oxidation steps at C-7 and C-13 of 13-desoxypaspaline to form paspalicine and paspalinine respectively. The indole diterpene prenyltransferase janD may then convert paspalinine into shearinine K which is substrate of janO and/or additional enzymes for oxidation and cyclization to generate shearinine A. In Penicillium janthinellum (Penicillium vitale), this protein is FAD-linked oxidoreductase janO.